The chain runs to 498 residues: ATP synthase subunit beta, chloroplastic (498 aa).

172–179 (GGAGVGKT) contributes to the ATP binding site.

Belongs to the ATPase alpha/beta chains family. As to quaternary structure, F-type ATPases have 2 components, CF(1) - the catalytic core - and CF(0) - the membrane proton channel. CF(1) has five subunits: alpha(3), beta(3), gamma(1), delta(1), epsilon(1). CF(0) has four main subunits: a(1), b(1), b'(1) and c(9-12).

It is found in the plastid. It localises to the chloroplast thylakoid membrane. The enzyme catalyses ATP + H2O + 4 H(+)(in) = ADP + phosphate + 5 H(+)(out). Functionally, produces ATP from ADP in the presence of a proton gradient across the membrane. The catalytic sites are hosted primarily by the beta subunits. The polypeptide is ATP synthase subunit beta, chloroplastic (Saccharum hybrid (Sugarcane)).